Reading from the N-terminus, the 409-residue chain is Imidazolonepropionase (409 aa).

Fe(3+) is bound by residues H78 and H80. Residues H78 and H80 each coordinate Zn(2+). The 4-imidazolone-5-propanoate site is built by R87, Y150, and H183. Position 150 (Y150) interacts with N-formimidoyl-L-glutamate. Fe(3+) is bound at residue H248. H248 contacts Zn(2+). Q251 is a 4-imidazolone-5-propanoate binding site. D323 contributes to the Fe(3+) binding site. A Zn(2+)-binding site is contributed by D323. N325 and G327 together coordinate N-formimidoyl-L-glutamate. A 4-imidazolone-5-propanoate-binding site is contributed by T328.

This sequence belongs to the metallo-dependent hydrolases superfamily. HutI family. Requires Zn(2+) as cofactor. It depends on Fe(3+) as a cofactor.

It localises to the cytoplasm. It carries out the reaction 4-imidazolone-5-propanoate + H2O = N-formimidoyl-L-glutamate. Its pathway is amino-acid degradation; L-histidine degradation into L-glutamate; N-formimidoyl-L-glutamate from L-histidine: step 3/3. Its function is as follows. Catalyzes the hydrolytic cleavage of the carbon-nitrogen bond in imidazolone-5-propanoate to yield N-formimidoyl-L-glutamate. It is the third step in the universal histidine degradation pathway. The polypeptide is Imidazolonepropionase (Mesorhizobium japonicum (strain LMG 29417 / CECT 9101 / MAFF 303099) (Mesorhizobium loti (strain MAFF 303099))).